The primary structure comprises 42 residues: Large ribosomal subunit protein bL36 (42 aa).

Belongs to the bacterial ribosomal protein bL36 family.

This Ehrlichia ruminantium (strain Gardel) protein is Large ribosomal subunit protein bL36.